The chain runs to 163 residues: Single-stranded DNA-binding protein 2 (163 aa).

The SSB domain maps to 1-104; the sequence is MINNVVLVGR…VVADNFQMLE (104 aa). Residues 109 to 163 form a disordered region; sequence REGGSTGSFNGGFNNNTSSSNSYSAPAQQTPNFGRDDSPFGNSNPMDISDDDLPF. A compositionally biased stretch (low complexity) spans 119–130; the sequence is GGFNNNTSSSNS. Residues 131–140 are compositionally biased toward polar residues; sequence YSAPAQQTPN. Positions 158 to 163 match the Important for interaction with partner proteins motif; that stretch reads DDDLPF.

As to quaternary structure, homotetramer.

Plays an important role in DNA replication, recombination and repair. Binds to ssDNA and to an array of partner proteins to recruit them to their sites of action during DNA metabolism. The sequence is that of Single-stranded DNA-binding protein 2 (ssb2) from Streptococcus pyogenes serotype M18 (strain MGAS8232).